Here is a 736-residue protein sequence, read N- to C-terminus: MKHDHHQGHTHSGKGHACHHEHNSPKTQQASSKMEGPIVYTCPMHPEIRQSAPGHCPLCGMALEPETVTVSEVVSPEYLDMRRRFWIALMLTIPVVILEMGGHGLKHFISGNGSSWIQLLLATPVVLWGGWPFFKRGWQSLKTGQLNMFTLIAMGIGVAWIYSMVAVLWPGVFPHAFRSQEGVVAVYFEAAAVITTLVLLGQVLELKAREQTGSAIRALLKLVPESAHRIKEDGSEEEVSLDNVAVGDLLRVRPGEKIPVDGEVQEGRSFVDESMVTGEPIPVAKEASAKVIGATINQTGSFVMKALHVGSDTMLARIVQMVSDAQRSRAPIQRLADTVSGWFVPAVILVAVLSFIVWALLGPQPALSYGLIAAVSVLIIACPCALGLATPMSIMVGVGKGAQSGVLIKNAEALERMEKVNTLVVDKTGTLTEGHPKLTRIVTDDFVEDNALALAAALEHQSEHPLANAIVHAAKEKGLSLGSVEAFEAPTGKGVVGQVDGHHVAIGNARLMQEHGGDNAPLFEKADELRGKGASVMFMAVDGKTVALLVVEDPIKSSTPETILELQQSGIEIVMLTGDSKRTAEAVAGTLGIKKVVAEIMPEDKSRIVSELKDKGLIVAMAGDGVNDAPALAKADIGIAMGTGTDVAIESAGVTLLHGDLRGIAKARRLSESTMSNIRQNLFFAFIYNVLGVPLAAGVLYPLTGLLLSPMIAAAAMALSSVSVIINALRLKRVTL.

The span at 1–17 (MKHDHHQGHTHSGKGHA) shows a compositional bias: basic residues. Positions 1 to 32 (MKHDHHQGHTHSGKGHACHHEHNSPKTQQASS) are disordered. 6 helical membrane passes run 85–105 (FWIALMLTIPVVILEMGGHGL), 114–134 (SSWIQLLLATPVVLWGGWPFF), 149–169 (FTLIAMGIGVAWIYSMVAVLW), 183–203 (VVAVYFEAAAVITTLVLLGQV), 341–361 (GWFVPAVILVAVLSFIVWALL), and 369–389 (YGLIAAVSVLIIACPCALGLA). Aspartate 426 acts as the 4-aspartylphosphate intermediate in catalysis. Positions 426, 428, and 624 each coordinate Mg(2+). The next 2 membrane-spanning stretches (helical) occupy residues 682–702 (LFFAFIYNVLGVPLAAGVLYP) and 706–726 (LLLSPMIAAAAMALSSVSVII).

Belongs to the cation transport ATPase (P-type) (TC 3.A.3) family. Type IB subfamily. Requires Mg(2+) as cofactor.

It localises to the cell inner membrane. It catalyses the reaction Cu(+)(in) + ATP + H2O = Cu(+)(out) + ADP + phosphate + H(+). Activated by phospholipids, Mg(2+) and Cu(+). Its function is as follows. Couples the hydrolysis of ATP with the export of copper. The polypeptide is Copper-exporting P-type ATPase (Legionella pneumophila subsp. pneumophila (strain Philadelphia 1 / ATCC 33152 / DSM 7513)).